The chain runs to 208 residues: MKIVEVKHPLVKHKLGLMRENDISTKRFRELASEVGSLLTYVATADLETETVTIEGWNGPVEIEQIKGKKITVVPILRAGLGMMEGVLENVPSARISVVGVYRDEETLKPVPYFQKLVSNINERMALVVDPMLATGGSMIATIDLLKKAGCQSIKVLVLVAAPEGIKALEEAHPDVELYTASIDQGLNEHGYIIPGLGDAGDKIFGTK.

5-phospho-alpha-D-ribose 1-diphosphate is bound by residues Arg-78, Arg-103, and 130–138 (DPMLATGGS). Residues Ile-193 and 198–200 (GDA) each bind uracil. Asp-199 is a binding site for 5-phospho-alpha-D-ribose 1-diphosphate.

It belongs to the UPRTase family. The cofactor is Mg(2+).

It carries out the reaction UMP + diphosphate = 5-phospho-alpha-D-ribose 1-diphosphate + uracil. Its pathway is pyrimidine metabolism; UMP biosynthesis via salvage pathway; UMP from uracil: step 1/1. Its activity is regulated as follows. Allosterically activated by GTP. Functionally, catalyzes the conversion of uracil and 5-phospho-alpha-D-ribose 1-diphosphate (PRPP) to UMP and diphosphate. The polypeptide is Uracil phosphoribosyltransferase (Yersinia pestis).